Reading from the N-terminus, the 109-residue chain is Large ribosomal subunit protein uL24 (109 aa).

This sequence belongs to the universal ribosomal protein uL24 family. Part of the 50S ribosomal subunit.

Functionally, one of two assembly initiator proteins, it binds directly to the 5'-end of the 23S rRNA, where it nucleates assembly of the 50S subunit. One of the proteins that surrounds the polypeptide exit tunnel on the outside of the subunit. The chain is Large ribosomal subunit protein uL24 from Hamiltonella defensa subsp. Acyrthosiphon pisum (strain 5AT).